The primary structure comprises 331 residues: 4-hydroxythreonine-4-phosphate dehydrogenase (331 aa).

Positions 137 and 138 each coordinate substrate. A divalent metal cation is bound by residues His167, His212, and His267. Lys275, Asn284, and Arg293 together coordinate substrate.

Belongs to the PdxA family. In terms of assembly, homodimer. The cofactor is Zn(2+). It depends on Mg(2+) as a cofactor. Co(2+) serves as cofactor.

It is found in the cytoplasm. The enzyme catalyses 4-(phosphooxy)-L-threonine + NAD(+) = 3-amino-2-oxopropyl phosphate + CO2 + NADH. It functions in the pathway cofactor biosynthesis; pyridoxine 5'-phosphate biosynthesis; pyridoxine 5'-phosphate from D-erythrose 4-phosphate: step 4/5. Catalyzes the NAD(P)-dependent oxidation of 4-(phosphooxy)-L-threonine (HTP) into 2-amino-3-oxo-4-(phosphooxy)butyric acid which spontaneously decarboxylates to form 3-amino-2-oxopropyl phosphate (AHAP). The sequence is that of 4-hydroxythreonine-4-phosphate dehydrogenase from Yersinia pseudotuberculosis serotype I (strain IP32953).